The chain runs to 627 residues: Carnitine O-acetyltransferase, mitochondrial (627 aa).

The Proton acceptor role is filled by histidine 336. CoA-binding positions include lysine 418 and 422-429; that span reads KKFKVSPD. Positions 451, 453, and 464 each coordinate (R)-carnitine. Residue glutamine 553 coordinates CoA. The Microbody targeting signal motif lies at 625-627; that stretch reads PKL.

This sequence belongs to the carnitine/choline acetyltransferase family.

It localises to the peroxisome. The protein resides in the mitochondrion inner membrane. It catalyses the reaction (R)-carnitine + acetyl-CoA = O-acetyl-(R)-carnitine + CoA. In terms of biological role, carnitine acetylase is specific for short chain fatty acids. Carnitine acetylase seems to affect the flux through the pyruvate dehydrogenase complex. It may be involved as well in the transport of acetyl-CoA into mitochondria. The sequence is that of Carnitine O-acetyltransferase, mitochondrial (CAT2) from Candida tropicalis (Yeast).